Here is a 446-residue protein sequence, read N- to C-terminus: Tubulin beta-8 chain (446 aa).

GTP-binding residues include Q11, E69, S138, G142, T143, G144, N204, and N226. E69 provides a ligand contact to Mg(2+). The segment at Q426–A446 is disordered. Residues T429–A446 are compositionally biased toward acidic residues.

The protein belongs to the tubulin family. Dimer of alpha and beta chains. A typical microtubule is a hollow water-filled tube with an outer diameter of 25 nm and an inner diameter of 15 nM. Alpha-beta heterodimers associate head-to-tail to form protofilaments running lengthwise along the microtubule wall with the beta-tubulin subunit facing the microtubule plus end conferring a structural polarity. Microtubules usually have 13 protofilaments but different protofilament numbers can be found in some organisms and specialized cells. It depends on Mg(2+) as a cofactor. As to expression, expressed in anthers.

Its subcellular location is the cytoplasm. It localises to the cytoskeleton. Functionally, tubulin is the major constituent of microtubules, a cylinder consisting of laterally associated linear protofilaments composed of alpha- and beta-tubulin heterodimers. Microtubules grow by the addition of GTP-tubulin dimers to the microtubule end, where a stabilizing cap forms. Below the cap, tubulin dimers are in GDP-bound state, owing to GTPase activity of alpha-tubulin. This chain is Tubulin beta-8 chain (TUBB8), found in Oryza sativa subsp. japonica (Rice).